The sequence spans 313 residues: Ribonuclease HIII (313 aa).

Residues 98-313 (YNCIGSDEAG…REKALKLIKK (216 aa)) form the RNase H type-2 domain. A divalent metal cation contacts are provided by Asp-104, Glu-105, and Asp-208.

The protein belongs to the RNase HII family. RnhC subfamily. It depends on Mn(2+) as a cofactor. Requires Mg(2+) as cofactor.

It localises to the cytoplasm. The enzyme catalyses Endonucleolytic cleavage to 5'-phosphomonoester.. Its function is as follows. Endonuclease that specifically degrades the RNA of RNA-DNA hybrids. The sequence is that of Ribonuclease HIII from Macrococcus caseolyticus (strain JCSC5402) (Macrococcoides caseolyticum).